We begin with the raw amino-acid sequence, 702 residues long: MPRKTPIERYRNIGISAHIDAGKTTTTERILFYTGVNHKLGEVHDGAATMDWMEQEQERGITITSAATTAFWKGMANNYPEHRINIIDTPGHVDFTIEVERSMRVLDGACMVYDAVGGVQPQSETVWRQANKYSVPRIAFVNKMDRVGADFFRVRTQIADRLKGNAVPIQIPVGAEDHFKGVVDLVKMRAIVWDDDSQGVRFEYTDIPPELVATAKEWHDKMVEAAAEASEELLERYLSGEPLSEEEIKTGLRKRTVAGEIVPMLCGSAFKNKGVQAMLDAVIDYLPSPVDVPAILGHTEDDKEAERHPSDDEPFSALAFKIMTDPFVGQLIFFRVYSGVVNSGDTVYNPVKGKRERLGRILQMHANVRNEIKEVRAGDIAAAVGLKEATTGDTLCDPDKVIILERMSFPEPVISQAVEPKTKADQEKMGIALNRLAQEDPSFRVATDEESGQTIISGMGELHLEILVDRMKREFGVEASVGKPQVAYRETIKGKARDVEGKFIKQSGGRGQYGHVVLDVEPMPQGGGYEFVDAIKGGVVPREFIPAVDKGIRETLETGVLAGYPVVDVKATLVFGSYHDVDSNENAFRMAGSMAFKEGMRRAKPVLLEPMMAVEVETPEEFTGNVMGDLSSRRGMVHGMEDIAGGGGKIVRAEVPLATMFGYSTSLRSLTQGRATFTMEFKHYAEAPANVAEAVINARKVG.

The 283-residue stretch at 8–290 (ERYRNIGISA…AVIDYLPSPV (283 aa)) folds into the tr-type G domain. Residues 17–24 (AHIDAGKT), 88–92 (DTPGH), and 142–145 (NKMD) each bind GTP.

It belongs to the TRAFAC class translation factor GTPase superfamily. Classic translation factor GTPase family. EF-G/EF-2 subfamily.

It is found in the cytoplasm. Catalyzes the GTP-dependent ribosomal translocation step during translation elongation. During this step, the ribosome changes from the pre-translocational (PRE) to the post-translocational (POST) state as the newly formed A-site-bound peptidyl-tRNA and P-site-bound deacylated tRNA move to the P and E sites, respectively. Catalyzes the coordinated movement of the two tRNA molecules, the mRNA and conformational changes in the ribosome. The sequence is that of Elongation factor G 2 from Cupriavidus metallidurans (strain ATCC 43123 / DSM 2839 / NBRC 102507 / CH34) (Ralstonia metallidurans).